A 569-amino-acid polypeptide reads, in one-letter code: Oxygen-dependent choline dehydrogenase (569 aa).

Residue 9 to 38 (DYVIIGGGSAGSVLGNRLSEDKDKEVLVLE) coordinates FAD. The active-site Proton acceptor is the histidine 475.

This sequence belongs to the GMC oxidoreductase family. Requires FAD as cofactor.

It catalyses the reaction choline + A = betaine aldehyde + AH2. It carries out the reaction betaine aldehyde + NAD(+) + H2O = glycine betaine + NADH + 2 H(+). Its pathway is amine and polyamine biosynthesis; betaine biosynthesis via choline pathway; betaine aldehyde from choline (cytochrome c reductase route): step 1/1. Involved in the biosynthesis of the osmoprotectant glycine betaine. Catalyzes the oxidation of choline to betaine aldehyde and betaine aldehyde to glycine betaine at the same rate. The sequence is that of Oxygen-dependent choline dehydrogenase from Staphylococcus aureus (strain MSSA476).